We begin with the raw amino-acid sequence, 278 residues long: Large ribosomal subunit protein uL2 (278 aa).

A disordered region spans residues 223-278 (GSVMNPNDHPHGGGEGKAPIGHPSPMSPWGKKTLGKKTRDHKAKSEKFIVRHRRAK). Basic residues predominate over residues 255 to 264 (TLGKKTRDHK).

This sequence belongs to the universal ribosomal protein uL2 family. Part of the 50S ribosomal subunit. Forms a bridge to the 30S subunit in the 70S ribosome.

One of the primary rRNA binding proteins. Required for association of the 30S and 50S subunits to form the 70S ribosome, for tRNA binding and peptide bond formation. It has been suggested to have peptidyltransferase activity; this is somewhat controversial. Makes several contacts with the 16S rRNA in the 70S ribosome. The protein is Large ribosomal subunit protein uL2 of Lacticaseibacillus paracasei (strain ATCC 334 / BCRC 17002 / CCUG 31169 / CIP 107868 / KCTC 3260 / NRRL B-441) (Lactobacillus paracasei).